We begin with the raw amino-acid sequence, 352 residues long: Phosphate acyltransferase (352 aa).

This sequence belongs to the PlsX family. In terms of assembly, homodimer. Probably interacts with PlsY.

It localises to the cytoplasm. It carries out the reaction a fatty acyl-[ACP] + phosphate = an acyl phosphate + holo-[ACP]. It functions in the pathway lipid metabolism; phospholipid metabolism. In terms of biological role, catalyzes the reversible formation of acyl-phosphate (acyl-PO(4)) from acyl-[acyl-carrier-protein] (acyl-ACP). This enzyme utilizes acyl-ACP as fatty acyl donor, but not acyl-CoA. This is Phosphate acyltransferase from Bordetella bronchiseptica (strain ATCC BAA-588 / NCTC 13252 / RB50) (Alcaligenes bronchisepticus).